The following is a 456-amino-acid chain: tRNA modification GTPase MnmE (456 aa).

Positions 24, 81, and 120 each coordinate (6S)-5-formyl-5,6,7,8-tetrahydrofolate. The TrmE-type G domain occupies glycine 216 to glycine 379. Asparagine 226 contributes to the K(+) binding site. Residues asparagine 226–serine 231, threonine 245–threonine 251, aspartate 270–glycine 273, asparagine 335–aspartate 338, and serine 359–arginine 361 each bind GTP. Serine 230 provides a ligand contact to Mg(2+). The K(+) site is built by threonine 245, isoleucine 247, and threonine 250. A Mg(2+)-binding site is contributed by threonine 251. Position 456 (lysine 456) interacts with (6S)-5-formyl-5,6,7,8-tetrahydrofolate.

It belongs to the TRAFAC class TrmE-Era-EngA-EngB-Septin-like GTPase superfamily. TrmE GTPase family. As to quaternary structure, homodimer. Heterotetramer of two MnmE and two MnmG subunits. Requires K(+) as cofactor.

It localises to the cytoplasm. Its function is as follows. Exhibits a very high intrinsic GTPase hydrolysis rate. Involved in the addition of a carboxymethylaminomethyl (cmnm) group at the wobble position (U34) of certain tRNAs, forming tRNA-cmnm(5)s(2)U34. This chain is tRNA modification GTPase MnmE, found in Pseudomonas syringae pv. tomato (strain ATCC BAA-871 / DC3000).